Here is a 413-residue protein sequence, read N- to C-terminus: Alpha-1-antiproteinase (413 aa).

Residues 1–24 form the signal peptide; it reads MTPSISWRLLLLAGLCCLVPSYLA. At serine 33 the chain carries Phosphoserine. Residues asparagine 64, asparagine 101, and asparagine 265 are each glycosylated (N-linked (GlcNAc...) asparagine). The segment at 368-387 is RCL; that stretch reads ATTIVEAVFMSLPPILHFNH. Position 378 is a phosphoserine (serine 378).

Belongs to the serpin family. In terms of assembly, interacts with CELA2A. Interacts with ERGIC3 and LMAN1/ERGIC53. Interacts with PRSS1/Trypsin.

The protein localises to the secreted. In terms of biological role, inhibitor of serine proteases. The primary target is elastase, but also has a moderate affinity for plasmin and thrombin. The polypeptide is Alpha-1-antiproteinase (Serpina1) (Mus saxicola (Brown spiny mouse)).